The primary structure comprises 134 residues: Biopolymer transport protein exbD2 (134 aa).

The Cytoplasmic segment spans residues 1 to 17; sequence MRLGRRTSKQEEAQIDL. Residues 18–38 traverse the membrane as a helical segment; it reads TSMLDIVFIMLIFFIVTSSFV. Topologically, residues 39–134 are periplasmic; that stretch reads RESGVEVNRP…KSIALAAEKP (96 aa).

Belongs to the ExbD/TolR family. The accessory proteins ExbB and ExbD seem to form a complex with TonB.

It localises to the cell inner membrane. In terms of biological role, involved in the TonB-dependent energy-dependent transport of various receptor-bound substrates. This chain is Biopolymer transport protein exbD2 (exbD2), found in Vibrio cholerae serotype O1 (strain ATCC 39315 / El Tor Inaba N16961).